The following is a 371-amino-acid chain: Phosphatase IMPL1, chloroplastic (371 aa).

A chloroplast-targeting transit peptide spans 1–60 (MGRSLIFSGNMSLRISHLPRSSLPLQNPISGRTVNRTFRYRCTRILSNSFKSTTRLQTKA). Val61 is modified (N-acetylvaline). 4 residues coordinate Mg(2+): Glu148, Asp165, Leu167, and Asp168. Glu148 provides a ligand contact to substrate. Residues 167-170 (LDGT), 273-275 (GAA), Glu292, and Asp299 contribute to the substrate site. Asp299 is a binding site for Mg(2+).

It belongs to the inositol monophosphatase superfamily. The cofactor is Mg(2+). Ubiquitous. Expressed in pistil and seed endosperm.

It is found in the plastid. The protein resides in the chloroplast stroma. It catalyses the reaction a myo-inositol phosphate + H2O = myo-inositol + phosphate. The protein operates within polyol metabolism; myo-inositol biosynthesis; myo-inositol from D-glucose 6-phosphate: step 2/2. Phosphatase acting preferentially on D-myoinositol 1-phosphate (D-Ins 1-P). The protein is Phosphatase IMPL1, chloroplastic (IMPL1) of Arabidopsis thaliana (Mouse-ear cress).